Here is a 256-residue protein sequence, read N- to C-terminus: 4-hydroxy-tetrahydrodipicolinate reductase (256 aa).

Residues Gly12–Val17, Asp39, Gly86–Thr88, and Ala110–Tyr113 contribute to the NAD(+) site. Residue His144 is the Proton donor/acceptor of the active site. Residue His145 coordinates (S)-2,3,4,5-tetrahydrodipicolinate. Lys148 functions as the Proton donor in the catalytic mechanism. Gly154–Thr155 lines the (S)-2,3,4,5-tetrahydrodipicolinate pocket.

It belongs to the DapB family.

The protein resides in the cytoplasm. It catalyses the reaction (S)-2,3,4,5-tetrahydrodipicolinate + NAD(+) + H2O = (2S,4S)-4-hydroxy-2,3,4,5-tetrahydrodipicolinate + NADH + H(+). The catalysed reaction is (S)-2,3,4,5-tetrahydrodipicolinate + NADP(+) + H2O = (2S,4S)-4-hydroxy-2,3,4,5-tetrahydrodipicolinate + NADPH + H(+). Its pathway is amino-acid biosynthesis; L-lysine biosynthesis via DAP pathway; (S)-tetrahydrodipicolinate from L-aspartate: step 4/4. Functionally, catalyzes the conversion of 4-hydroxy-tetrahydrodipicolinate (HTPA) to tetrahydrodipicolinate. In Gluconacetobacter diazotrophicus (strain ATCC 49037 / DSM 5601 / CCUG 37298 / CIP 103539 / LMG 7603 / PAl5), this protein is 4-hydroxy-tetrahydrodipicolinate reductase.